A 324-amino-acid polypeptide reads, in one-letter code: Carbonic anhydrase, chloroplastic (324 aa).

Belongs to the beta-class carbonic anhydrase family. Homohexamer.

Its subcellular location is the plastid. The protein localises to the chloroplast stroma. It carries out the reaction hydrogencarbonate + H(+) = CO2 + H2O. In terms of biological role, reversible hydration of carbon dioxide. The polypeptide is Carbonic anhydrase, chloroplastic (Hordeum vulgare (Barley)).